A 708-amino-acid chain; its full sequence is Probable GTP diphosphokinase RSH3, chloroplastic (708 aa).

2 disordered regions span residues 1–50 and 109–134; these read MSLP…AAGG and HSPV…SWLA. The N-terminal 58 residues, 1-58, are a transit peptide targeting the chloroplast; sequence MSLPAISLYTSPPPGAVYSSEFDPSSRGSSPPCSTAPPSTSHRPPAAAGGLSCLFSSP. Low complexity-rich tracts occupy residues 29-41 and 118-131; these read SSPP…PSTS and PSSS…PPAS. The region spanning 233–337 is the HD domain; the sequence is YLQHCVETAV…IKLADRVHNM (105 aa).

It belongs to the RelA/SpoT family.

It localises to the plastid. The protein resides in the chloroplast. The catalysed reaction is GTP + ATP = guanosine 3'-diphosphate 5'-triphosphate + AMP. Functionally, probable ppGpp (guanosine 3'-diphosphate 5'-diphosphate) synthetase that may be involved in a rapid plant ppGpp-mediated response to pathogens and other stresses. The sequence is that of Probable GTP diphosphokinase RSH3, chloroplastic (RSH3) from Oryza sativa subsp. japonica (Rice).